The sequence spans 606 residues: Zinc finger protein 214 (606 aa).

The KRAB domain occupies 3 to 83 (VTFEDVTIIF…GAQMYENQNY (81 aa)). Residues 275-297 (YGCDEVDGNFHQSSGVHFHQRVH) form a C2H2-type 1; degenerate zinc finger. The C2H2-type 2 zinc-finger motif lies at 303-325 (YSCNACGKSFSQISSLHNHQRVH). A C2H2-type 3; degenerate zinc finger spans residues 330–352 (FYKIECDKDLSRNSLLHIHQRLH). 8 consecutive C2H2-type zinc fingers follow at residues 358-380 (FKCNQCGKSFNRSSVLHVHQRVH), 386-408 (YKCDECGKGFSQSSNLRIHQLVH), 414-436 (YKCEDCGKGFTQRSNLQIHQRVH), 442-464 (YKCDDCGKDFSHSSDLRIHQRVH), 470-492 (YTCPECGKGFSKSSKLHTHQRVH), 498-520 (YKCEECGKGFSQRSHLLIHQRVH), 526-548 (YKCHDCGKGFSHSSNLHIHQRVH), and 554-576 (YQCAKCGKGFSHSSALRIHQRVH).

Belongs to the krueppel C2H2-type zinc-finger protein family.

The protein resides in the nucleus. In terms of biological role, may be involved in transcriptional regulation. The chain is Zinc finger protein 214 (ZNF214) from Homo sapiens (Human).